We begin with the raw amino-acid sequence, 1411 residues long: Early endosome antigen 1 (1411 aa).

The segment at M1–I27 is disordered. Positions S15–I27 are enriched in polar residues. The segment at F41–H64 adopts a C2H2-type zinc-finger fold. Phosphoserine occurs at positions 52 and 70. Residues G74–K1348 are a coiled coil. Residues V473 to T501 are disordered. The span at H481–H490 shows a compositional bias: basic and acidic residues. The FYVE-type zinc finger occupies D1352–Q1410. Zn(2+) contacts are provided by C1358, C1361, C1374, C1377, C1382, C1385, C1402, and C1405.

Homodimer. Binds STX6. Binds RAB5A, RAB5B, RAB5C and RAB22A that have been activated by GTP-binding. Interacts with RAB31. Interacts with ERBB2. Interacts with SAMD9 and SAMD9L. May interact with PLEKHF2.

The protein localises to the cytoplasm. The protein resides in the early endosome membrane. Binds phospholipid vesicles containing phosphatidylinositol 3-phosphate and participates in endosomal trafficking. The chain is Early endosome antigen 1 (EEA1) from Homo sapiens (Human).